The chain runs to 60 residues: U1-theraphotoxin-Agm3a (60 aa).

The first 21 residues, 1 to 21, serve as a signal peptide directing secretion; the sequence is MKFSVLVFILGLVLLLALSSA. Positions 22–29 are excised as a propeptide; sequence TEMEENAR. 3 disulfide bridges follow: cysteine 31–cysteine 45, cysteine 38–cysteine 50, and cysteine 44–cysteine 57.

The protein belongs to the neurotoxin 10 (Hwtx-1) family. 63 (VsTx1) subfamily. Expressed by the venom gland.

The protein localises to the secreted. Inhibits sodium channels Nav1.7/SCN9A and potassium channels Kv11.1/KCNH2. Also binds the voltage-sensor domain of the potassium channel KvAP (from the archaeon Aeropyrum pernix) with very slow apparent binding kinetics and affects channel gating. Reaches its target by dynamically partitioning into anionic or zwitterionic headgroup lipid membranes. May bind to the open state of KvAP. The protein is U1-theraphotoxin-Agm3a of Acanthoscurria gomesiana (Tarantula spider).